Reading from the N-terminus, the 66-residue chain is Delta-buthitoxin-Hj1a (66 aa).

The region spanning 4–66 (RDAYIAQPHN…EPIKVPGKCH (63 aa)) is the LCN-type CS-alpha/beta domain. Intrachain disulfides connect cysteine 14–cysteine 65, cysteine 18–cysteine 38, cysteine 24–cysteine 48, and cysteine 28–cysteine 50.

The protein belongs to the long (4 C-C) scorpion toxin superfamily. Sodium channel inhibitor family. Alpha subfamily. As to expression, expressed by the venom gland.

The protein localises to the secreted. Its function is as follows. This recombinant toxin slows fast inactivation on Nav1.1/SCN1A (EC(50)=17 nM), Nav1.4/SN4A (EC(50)=7.5 nM), Nav1.5/SCN5A (EC(50)=9.2 nM) and Nav1.6/SCN8A (EC(50)=37.3 nM) voltage-gated sodium channels. On Nav1.1/SCN1A channel, it acts as an agonist by inducing a shift in both the voltage dependence of channel inactivation (alpha-toxin activity) and activation (beta-toxin activity). In vivo, shows moderate insecticidal activities. It induces irreversible paralysis in blowflies and lethal effects in D.melanogaster. The protein is Delta-buthitoxin-Hj1a of Hottentotta judaicus (Black scorpion).